Reading from the N-terminus, the 286-residue chain is ATP synthase gamma chain (286 aa).

Belongs to the ATPase gamma chain family. F-type ATPases have 2 components, CF(1) - the catalytic core - and CF(0) - the membrane proton channel. CF(1) has five subunits: alpha(3), beta(3), gamma(1), delta(1), epsilon(1). CF(0) has three main subunits: a, b and c.

The protein resides in the cell inner membrane. Functionally, produces ATP from ADP in the presence of a proton gradient across the membrane. The gamma chain is believed to be important in regulating ATPase activity and the flow of protons through the CF(0) complex. The chain is ATP synthase gamma chain from Shewanella sp. (strain ANA-3).